A 130-amino-acid chain; its full sequence is Neelaredoxin (130 aa).

Residues Glu-15, His-17, His-45, His-51, Cys-115, and His-118 each coordinate Fe cation.

This sequence belongs to the desulfoferrodoxin family. In terms of assembly, monomer. Fe cation is required as a cofactor.

The catalysed reaction is 2 superoxide + 2 H(+) = H2O2 + O2. Functionally, non-heme iron protein. In Megalodesulfovibrio gigas (Desulfovibrio gigas), this protein is Neelaredoxin (nlr).